Reading from the N-terminus, the 285-residue chain is Bifunctional protein FolD (285 aa).

Residues 165–167 (GRG), Thr192, and Val233 each bind NADP(+).

This sequence belongs to the tetrahydrofolate dehydrogenase/cyclohydrolase family. In terms of assembly, homodimer.

It carries out the reaction (6R)-5,10-methylene-5,6,7,8-tetrahydrofolate + NADP(+) = (6R)-5,10-methenyltetrahydrofolate + NADPH. The enzyme catalyses (6R)-5,10-methenyltetrahydrofolate + H2O = (6R)-10-formyltetrahydrofolate + H(+). It participates in one-carbon metabolism; tetrahydrofolate interconversion. In terms of biological role, catalyzes the oxidation of 5,10-methylenetetrahydrofolate to 5,10-methenyltetrahydrofolate and then the hydrolysis of 5,10-methenyltetrahydrofolate to 10-formyltetrahydrofolate. The protein is Bifunctional protein FolD of Corynebacterium jeikeium (strain K411).